We begin with the raw amino-acid sequence, 457 residues long: Succinate-semialdehyde dehydrogenase [NADP(+)] (457 aa).

NADP(+) contacts are provided by residues 133–134, 157–160, and 209–210; these read WN, KHAS, and GS. Glu231 serves as the catalytic Proton acceptor. Leu232 contributes to the NADP(+) binding site. Cys265 functions as the Nucleophile in the catalytic mechanism. Glu362 lines the NADP(+) pocket.

It belongs to the aldehyde dehydrogenase family.

The catalysed reaction is succinate semialdehyde + NADP(+) + H2O = succinate + NADPH + 2 H(+). Functionally, catalyzes the NADP(+)-dependent oxidation of succinate semialdehyde to succinate. It is believed to be the main source of succinate semialdehyde dehydrogenase activity in Mycobacterium. The polypeptide is Succinate-semialdehyde dehydrogenase [NADP(+)] (gabD1) (Mycobacterium leprae (strain TN)).